Here is an 85-residue protein sequence, read N- to C-terminus: Putative RING finger protein 095L (85 aa).

The segment at 39–73 adopts an RING-type; degenerate zinc-finger fold; the sequence is CPIWYNYQVNTVFLPCAHVACYLCSKIIKNCHLCR.

The chain is Putative RING finger protein 095L from Invertebrate iridescent virus 6 (IIV-6).